The following is a 266-amino-acid chain: Integral membrane protein 2B (266 aa).

At 1 to 54 (MVKVTFNSALAQKEAKKDEPKSSEEALIVPPDAVAVDCKDPGDVVPVGQRRAWC) the chain is on the cytoplasmic side. A helical; Signal-anchor for type II membrane protein transmembrane segment spans residues 55-75 (WCMCFGLAFMLAGVILGGAYL). Residues 76-266 (YKYFALQPDD…KFAVETLICS (191 aa)) lie on the Lumenal side of the membrane. The necessary for interaction with APP and inhibitor effects on APP processing stretch occupies residues 102–134 (EPSADAPAARYQTIEENIKIFEEDAVEFISVPV). Positions 137–231 (FADSDPANIV…LCHDKETYKL (95 aa)) constitute a BRICHOS domain. Disulfide bonds link Cys-164-Cys-223 and Cys-248-Cys-265. N-linked (GlcNAc...) asparagine glycosylation occurs at Asn-170.

It belongs to the ITM2 family. In terms of assembly, homodimer; disulfide-linked. Interacts with SPPL2A and SPPL2B. Interacts with APP. Mature BRI2 (mBRI2) interacts with the APP amyloid-beta A4 protein; the interaction occurs at the cell surface and in the endocytic compartments and enable alpha- and beta-secretase-induced APP cleavage inhibition. Mature BRI2 (mBRI2) interacts with the APP C99; the interaction occurs in the endocytic compartments and enable gamma-secretase-induced C99 cleavage inhibition. May form heterodimers with Bri23 peptide and APP amyloid-beta protein 40. Interacts with ADAM7 in sperm; the interaction increases following capacitation. The ectodomain C-terminal part of the imBRI2 is processed by furin producing a secreted Bri23 peptide and a mature BRI2, membrane form (mBRI2). The remaining part of the ectodomain of mBRI2 containing the BRICHOS domain is cleaved by ADAM10 and is secreted (BRI2C, soluble form). The membrane-bound N-terminal fragment (BRI2C, membrane form) is further proteolytically processed by SPPL2A and SPPL2B through regulated intramembrane proteolysis producing a secreted C-peptide and a BRI2 intracellular domain (BRI2 ICD) released in the cytosol. Shedding by ADAM10 facilitates intramembrane cleavage but is not absolutely required for BRI2 ICD generation. In terms of processing, glycosylation at Asn-170 is important for cell surface localization, but doesn't affect furin- and ADAM10-induced proteolytic processing. Expressed in the brain, testis, testicular sperm, epididymis and mature epididymal sperm (at protein level).

It localises to the golgi apparatus membrane. Its subcellular location is the cell membrane. It is found in the endosome membrane. The protein localises to the secreted. Plays a regulatory role in the processing of the amyloid-beta A4 precursor protein (APP) and acts as an inhibitor of the amyloid-beta peptide aggregation and fibrils deposition. Plays a role in the induction of neurite outgrowth. Functions as a protease inhibitor by blocking access of secretases to APP cleavage sites. Its function is as follows. Mature BRI2 (mBRI2) functions as a modulator of the amyloid-beta A4 precursor protein (APP) processing leading to a strong reduction in the secretion of secretase-processed amyloid-beta protein 40 and amyloid-beta protein 42. In terms of biological role, bri23 peptide prevents aggregation of APP amyloid-beta protein 42 into toxic oligomers. This chain is Integral membrane protein 2B (Itm2b), found in Mus musculus (Mouse).